We begin with the raw amino-acid sequence, 145 residues long: Cuticle protein 65 (145 aa).

7 repeat units span residues 27–30 (AAPA), 33–37 (AAPAV), 39–42 (AAPA), 86–89 (AAPV), 92–95 (AAPA), 98–101 (AAPA), and 123–126 (AAPA).

In terms of biological role, component of the cuticle of migratory locust which contains more than 100 different structural proteins. This Locusta migratoria (Migratory locust) protein is Cuticle protein 65.